The following is a 397-amino-acid chain: Flavohemoprotein (397 aa).

A Globin domain is found at 4–140; that stretch reads SFSPHTITLI…IANLLKDREA (137 aa). A heme b-binding site is contributed by histidine 87. Catalysis depends on charge relay system residues tyrosine 97 and glutamate 139. Residues 151–397 are reductase; sequence GGWIHWRRFV…FGPMDEEMAA (247 aa). An FAD-binding FR-type domain is found at 154 to 258; the sequence is IHWRRFVISK…TPPVGDFFLP (105 aa). FAD contacts are provided by residues tyrosine 192 and 207 to 210; that span reads RNYS. 271–276 is an NADP(+) binding site; the sequence is GVGLTP. 387-390 lines the FAD pocket; the sequence is FFGP.

This sequence belongs to the globin family. Two-domain flavohemoproteins subfamily. The protein in the C-terminal section; belongs to the flavoprotein pyridine nucleotide cytochrome reductase family. Heme b serves as cofactor. The cofactor is FAD.

The enzyme catalyses 2 nitric oxide + NADPH + 2 O2 = 2 nitrate + NADP(+) + H(+). The catalysed reaction is 2 nitric oxide + NADH + 2 O2 = 2 nitrate + NAD(+) + H(+). In terms of biological role, is involved in NO detoxification in an aerobic process, termed nitric oxide dioxygenase (NOD) reaction that utilizes O(2) and NAD(P)H to convert NO to nitrate, which protects the bacterium from various noxious nitrogen compounds. Therefore, plays a central role in the inducible response to nitrosative stress. In Xylella fastidiosa (strain 9a5c), this protein is Flavohemoprotein.